The chain runs to 203 residues: Large ribosomal subunit protein uL13 (203 aa).

Alanine 2 bears the N-acetylalanine mark. Arginine 59 carries the post-translational modification Citrulline. At serine 77 the chain carries Phosphoserine. Arginine 140 carries the citrulline modification. Residue lysine 191 is modified to N6-acetyllysine.

It belongs to the universal ribosomal protein uL13 family. In terms of assembly, component of the 60S ribosome. Component of the GAIT complex. Interacts with EIF4G1. Post-translationally, phosphorylation at Ser-77 upon interferon-gamma treatment in macrophages involves a DAPK1-DAPK3 kinase cascade and is causing release from the ribosome, association with the GAIT complex and subsequent involvement in transcript-selective translation inhibition. In terms of processing, citrullinated by PADI4.

It is found in the cytoplasm. Functionally, associated with ribosomes but is not required for canonical ribosome function and has extra-ribosomal functions. Component of the GAIT (gamma interferon-activated inhibitor of translation) complex which mediates interferon-gamma-induced transcript-selective translation inhibition in inflammation processes. Upon interferon-gamma activation and subsequent phosphorylation dissociates from the ribosome and assembles into the GAIT complex which binds to stem loop-containing GAIT elements in the 3'-UTR of diverse inflammatory mRNAs (such as ceruplasmin) and suppresses their translation. In the GAIT complex interacts with m7G cap-bound eIF4G at or near the eIF3-binding site and blocks the recruitment of the 43S ribosomal complex. Involved in methylation of rRNA. The chain is Large ribosomal subunit protein uL13 (Rpl13a) from Rattus norvegicus (Rat).